We begin with the raw amino-acid sequence, 425 residues long: Adenylosuccinate synthetase (425 aa).

GTP contacts are provided by residues 12–18 and 40–42; these read GDEGKGK and GHT. The Proton acceptor role is filled by aspartate 13. Mg(2+)-binding residues include aspartate 13 and glycine 40. Residues 13 to 16, 38 to 41, threonine 130, arginine 144, glutamine 224, threonine 239, and arginine 301 each bind IMP; these read DEGK and NAGH. Histidine 41 serves as the catalytic Proton donor. Position 297 to 303 (297 to 303) interacts with substrate; sequence TVSNRRR. Residues arginine 303, 329–331, and 411–413 contribute to the GTP site; these read KLD and STS.

It belongs to the adenylosuccinate synthetase family. In terms of assembly, homodimer. Requires Mg(2+) as cofactor.

It localises to the cytoplasm. It catalyses the reaction IMP + L-aspartate + GTP = N(6)-(1,2-dicarboxyethyl)-AMP + GDP + phosphate + 2 H(+). The protein operates within purine metabolism; AMP biosynthesis via de novo pathway; AMP from IMP: step 1/2. Functionally, plays an important role in the de novo pathway of purine nucleotide biosynthesis. Catalyzes the first committed step in the biosynthesis of AMP from IMP. This chain is Adenylosuccinate synthetase, found in Wolbachia pipientis subsp. Culex pipiens (strain wPip).